A 223-amino-acid chain; its full sequence is UPF0641 membrane protein PJ4664.05 (223 aa).

5 helical membrane passes run 10–30 (FNSF…FNWI), 49–69 (LTVL…FSDI), 81–101 (ILLY…WSIV), 146–166 (LSIG…MLWV), and 190–210 (TIFY…LKMV).

Belongs to the UPF0641 family.

The protein localises to the endoplasmic reticulum membrane. This is UPF0641 membrane protein PJ4664.05 from Schizosaccharomyces pombe (strain 972 / ATCC 24843) (Fission yeast).